Consider the following 119-residue polypeptide: Holo-[acyl-carrier-protein] synthase (119 aa).

Mg(2+)-binding residues include aspartate 8 and glutamate 59.

This sequence belongs to the P-Pant transferase superfamily. AcpS family. It depends on Mg(2+) as a cofactor.

Its subcellular location is the cytoplasm. The catalysed reaction is apo-[ACP] + CoA = holo-[ACP] + adenosine 3',5'-bisphosphate + H(+). Its function is as follows. Transfers the 4'-phosphopantetheine moiety from coenzyme A to a Ser of acyl-carrier-protein. The chain is Holo-[acyl-carrier-protein] synthase from Staphylococcus aureus (strain USA300).